Here is a 120-residue protein sequence, read N- to C-terminus: Transcription elongation factor 1 homolog (120 aa).

Cys25, Cys28, Cys49, and Cys52 together coordinate Zn(2+). The span at 84-110 (EDDVVQEEEEEVEEEEEEEEEEDDEDD) shows a compositional bias: acidic residues. Residues 84–120 (EDDVVQEEEEEVEEEEEEEEEEDDEDDHVSVKRKYNF) are disordered.

Belongs to the ELOF1 family.

The protein resides in the nucleus. In terms of biological role, transcription elongation factor implicated in the maintenance of proper chromatin structure in actively transcribed regions. This is Transcription elongation factor 1 homolog from Arabidopsis thaliana (Mouse-ear cress).